A 324-amino-acid polypeptide reads, in one-letter code: Olfactory receptor 8U3 (324 aa).

The Extracellular portion of the chain corresponds to 1–25 (MAEVNIIYVTVFILKGITNRPELQA). Residues 26–46 (PCFGVFLVIYLVTVLGNLGLI) traverse the membrane as a helical segment. The Cytoplasmic portion of the chain corresponds to 47 to 54 (TLIKIDTR). A helical transmembrane segment spans residues 55 to 75 (LHTPMYYFLSHLAFVDLCYSS). Over 76–99 (AITPKMMVNFVVERNTIPFHACAT) the chain is Extracellular. The cysteines at positions 97 and 189 are disulfide-linked. Residues 100 to 120 (QLGCFLTFMITECFLLASMAY) form a helical membrane-spanning segment. Residues 121-139 (DCYVAICSPLHYSTLMSRR) lie on the Cytoplasmic side of the membrane. The chain crosses the membrane as a helical span at residues 140 to 160 (VCIQLVAVPYIYSFLVALFHT). The Extracellular segment spans residues 161 to 196 (VITFRLTYCGPNLINHFYCDDLPFLALSCSDTHMKE). A helical membrane pass occupies residues 197-217 (ILIFAFAGFDMISSSSIVLTS). Residues 218-237 (YIFIIAAILRIRSTQGQHKA) lie on the Cytoplasmic side of the membrane. Residues 238 to 258 (ISTCGSHMVTVTIFYGTLIFM) traverse the membrane as a helical segment. At 259–271 (YLQPKSNHSLDTD) the chain is on the extracellular side. A glycan (N-linked (GlcNAc...) asparagine) is linked at Asn265. A helical transmembrane segment spans residues 272-292 (KMASVFYTVVIPMLNPLIYSL). Over 293–324 (RNKEVKDASKKALDKGCENLQILTFLKIRKLY) the chain is Cytoplasmic.

Belongs to the G-protein coupled receptor 1 family.

It is found in the cell membrane. Its function is as follows. Odorant receptor. The sequence is that of Olfactory receptor 8U3 from Homo sapiens (Human).